The primary structure comprises 336 residues: Dihydroorotate dehydrogenase (quinone) (336 aa).

FMN is bound by residues Ala62–Lys66 and Thr86. Residue Lys66 coordinates substrate. Asn111–Phe115 contributes to the substrate binding site. Residues Asn139 and Asn172 each coordinate FMN. Position 172 (Asn172) interacts with substrate. Ser175 functions as the Nucleophile in the catalytic mechanism. Residue Asn177 coordinates substrate. FMN contacts are provided by Lys217 and Thr245. Asn246 to Thr247 serves as a coordination point for substrate. Residues Gly268, Gly297, and Tyr318 to Ser319 each bind FMN.

Belongs to the dihydroorotate dehydrogenase family. Type 2 subfamily. As to quaternary structure, monomer. The cofactor is FMN.

The protein localises to the cell membrane. The catalysed reaction is (S)-dihydroorotate + a quinone = orotate + a quinol. It participates in pyrimidine metabolism; UMP biosynthesis via de novo pathway; orotate from (S)-dihydroorotate (quinone route): step 1/1. In terms of biological role, catalyzes the conversion of dihydroorotate to orotate with quinone as electron acceptor. In Psychromonas ingrahamii (strain DSM 17664 / CCUG 51855 / 37), this protein is Dihydroorotate dehydrogenase (quinone).